The sequence spans 209 residues: Dual-specificity protein phosphatase SDP1 (209 aa).

Residues 1-11 are compositionally biased toward polar residues; sequence MNIYTSPTRTP. The tract at residues 1 to 43 is disordered; it reads MNIYTSPTRTPNIAPKSGQRPSLPMLATDERSTDKESPNEDRE. The segment covering 28–43 has biased composition (basic and acidic residues); the sequence is TDERSTDKESPNEDRE. Cys47 and Cys142 are disulfide-bonded. The Tyrosine-protein phosphatase domain maps to 59–196; it reads GPLLVLPEKI…LMEWEVALNA (138 aa). 4-O-phospho-L-tyrosine is bound at residue His111. Cys140 (phosphocysteine intermediate) is an active-site residue.

This sequence belongs to the protein-tyrosine phosphatase family. Non-receptor class dual specificity subfamily.

The catalysed reaction is O-phospho-L-tyrosyl-[protein] + H2O = L-tyrosyl-[protein] + phosphate. Its function is as follows. Mediates dephosphorylation of MAPK substrates such as SLT2, acquiring enhanced catalytic activity under oxidative conditions. In Saccharomyces cerevisiae (strain ATCC 204508 / S288c) (Baker's yeast), this protein is Dual-specificity protein phosphatase SDP1 (SDP1).